The following is a 380-amino-acid chain: uncharacterized protein (380 aa).

2 disordered regions span residues 278–323 and 345–368; these read AATI…PRVA and SLPG…RPRR. Basic residues predominate over residues 301–319; sequence RNGPRRPARRGTSRGRRCA.

This is an uncharacterized protein from Mycobacterium tuberculosis (strain CDC 1551 / Oshkosh).